A 292-amino-acid chain; its full sequence is MFTGSIVALVTPMDDKGNVCRASLKKLIDYHVASGTSAIVSVGTTGESATLSHDEHGDVVLLTLELADGRIPIIAGTGANATAEGVCLTKRFENSGVVGCLTVTPYYNRPTQEGLYQHFKTIAENTELPQMLYNVPSRTGTDLLPETVGRLAKIKNIIGIKEAIGNLSRVSQIQQLVNDDFVLVSGDDATSLDFMQLGGHGVISVTANIAAREMVELCALARQGNFAQARLLNQRLMHLHQKLFVEPNPIPVKWAAKRLGLIATDTLRLPMTPLTDAGCSVVEQALKDAALL.

Pyruvate is bound at residue Thr-45. The Proton donor/acceptor role is filled by Tyr-133. The active-site Schiff-base intermediate with substrate is the Lys-161. Ile-203 contacts pyruvate.

Belongs to the DapA family. In terms of assembly, homotetramer; dimer of dimers.

It is found in the cytoplasm. It carries out the reaction L-aspartate 4-semialdehyde + pyruvate = (2S,4S)-4-hydroxy-2,3,4,5-tetrahydrodipicolinate + H2O + H(+). It functions in the pathway amino-acid biosynthesis; L-lysine biosynthesis via DAP pathway; (S)-tetrahydrodipicolinate from L-aspartate: step 3/4. Catalyzes the condensation of (S)-aspartate-beta-semialdehyde [(S)-ASA] and pyruvate to 4-hydroxy-tetrahydrodipicolinate (HTPA). In Erwinia tasmaniensis (strain DSM 17950 / CFBP 7177 / CIP 109463 / NCPPB 4357 / Et1/99), this protein is 4-hydroxy-tetrahydrodipicolinate synthase.